The following is a 59-amino-acid chain: Large ribosomal subunit protein uL30 (59 aa).

This sequence belongs to the universal ribosomal protein uL30 family. As to quaternary structure, part of the 50S ribosomal subunit.

The sequence is that of Large ribosomal subunit protein uL30 from Yersinia pseudotuberculosis serotype I (strain IP32953).